An 821-amino-acid chain; its full sequence is DNA gyrase subunit A (821 aa).

One can recognise a Topo IIA-type catalytic domain in the interval 35 to 500 (LPDVRDGLKP…GLETIEDEDL (466 aa)). Tyr123 acts as the O-(5'-phospho-DNA)-tyrosine intermediate in catalysis. The GyrA-box motif lies at 527-533 (QKRGGKG).

It belongs to the type II topoisomerase GyrA/ParC subunit family. In terms of assembly, heterotetramer, composed of two GyrA and two GyrB chains. In the heterotetramer, GyrA contains the active site tyrosine that forms a transient covalent intermediate with DNA, while GyrB binds cofactors and catalyzes ATP hydrolysis.

It localises to the cytoplasm. It carries out the reaction ATP-dependent breakage, passage and rejoining of double-stranded DNA.. Functionally, a type II topoisomerase that negatively supercoils closed circular double-stranded (ds) DNA in an ATP-dependent manner to modulate DNA topology and maintain chromosomes in an underwound state. Negative supercoiling favors strand separation, and DNA replication, transcription, recombination and repair, all of which involve strand separation. Also able to catalyze the interconversion of other topological isomers of dsDNA rings, including catenanes and knotted rings. Type II topoisomerases break and join 2 DNA strands simultaneously in an ATP-dependent manner. This chain is DNA gyrase subunit A, found in Bacillus subtilis (strain 168).